The following is a 100-amino-acid chain: uncharacterized protein (100 aa).

This is an uncharacterized protein from Borreliella burgdorferi (strain ATCC 35210 / DSM 4680 / CIP 102532 / B31) (Borrelia burgdorferi).